The primary structure comprises 962 residues: MKKFFDSRREQGSSGLGSGSSGGGGSSSGLGSGYIGRVFGIGRQQVTVDEVLAEGGFALVFLVRTSNGVKCALKRMFVNNEHDLQVCKREIQIMRDLSGHKNIVGYIDSSINNVSSGDVWEVLILMDFCRGGQVVNLMNQRLQTGFTENEVLQIFCDTCEAVARLHQCKTPIIHRDLKVENILLHDRGHYVLCDFGSATNKFQNPQAEGVNAVEDEIKKYTTLSYRAPEMVNLYSGKIITTKADIWALGCLLYKLCYFTLPFGESQVAICDGSFTIPDNSRYSQDMHCLIYMLEPDPDKRPDIYQVSYFSFKLLKKECPVPNVQNSPIPTKLPEPVKASEAAVKKTQPKARLTDPIPTTETSIAPRQRPKAGQTQPNPGILPIQPALTPRKRATVQPLPQATGPSNQPSLLASVSQPKAQATPSQPLQSSQPKQPQAPPTPQQTPAPQTQGLPTQAQATPQHQQQLLLKQQQQQQQQQQQQQPQQPTAPPQPSGTFYQQQQPQQQQAQTQQQFQAVHPAAQQSVTAQFPVVSQGGSQQQLMQNFYQQQQQQQQQQQQLMAQQAALQQKTAVVVPQPQAQPATAPQAAAAQEPQIQAPARQQPKVQTTPPPTIQGQKVGSLTPPSSPKTQRAGHRRILSDVTHSAVFGVPASKSTQLLHAAAAEASLSKSKSATTTPSGSPRTSQQNVSNASEGSTWNPFDDDNFSKLTAEELLNKDFAKLGEGKLPEKLGGSAESLIPGFQATQGDAFATSSFSAGTAEKRKGGQAVDSGIPLLSVSDPFIPLQVPDAPEKLIEGLKSPDTSLLLPDLLPMTDPFGSTSDAVIEKADAAVESLIPGLEPPVAQRLPSHTESVTSNRTDSLTGEDSLLDCSLLSNPTADLLDEFAPIALSASTHKAAEDSNLISGFGVAEGSEKVAEDEFDPIPVLITKNTQGGHSRNSSGSSESSLPNLARSLLLVDQLIDL.

Residue M1 is modified to N-acetylmethionine. Over residues M1–Q11 the composition is skewed to basic and acidic residues. The disordered stretch occupies residues M1–S27. Position 14 is a phosphoserine (S14). Over residues S14–S27 the composition is skewed to gly residues. Residues V46 to L314 form the Protein kinase domain. Residues L52–V60 and K74 each bind ATP. The active-site Proton acceptor is D176. At Y234 the chain carries Phosphotyrosine. S235 carries the phosphoserine modification. Disordered regions lie at residues N325 to A515 and P576 to H633. T353 and T388 each carry phosphothreonine. R390 carries the post-translational modification Omega-N-methylarginine. Over residues P397–K418 the composition is skewed to polar residues. Residues A419–Q434 show a composition bias toward low complexity. Pro residues predominate over residues P435–T444. Residue T440 is modified to Phosphothreonine. 3 stretches are compositionally biased toward low complexity: residues P445–Q485, Q498–Q514, and P576–T606. T607 is modified (phosphothreonine). The segment covering G614–T628 has biased composition (polar residues). S619 carries the phosphoserine modification. The residue at position 621 (T621) is a Phosphothreonine. Phosphoserine is present on residues S624, S625, S638, and S651. T654 is subject to Phosphothreonine. A compositionally biased stretch (low complexity) spans A664–S677. The segment at A664–D702 is disordered. Over residues G678–N697 the composition is skewed to polar residues. Residues S732, S847, S938, and S939 each carry the phosphoserine modification. The tract at residues E824–D961 is clathrin-binding domain (CBD). 2 disordered regions span residues P839–L860 and L925–L946. Polar residues predominate over residues P846 to L860. Over residues G932 to S945 the composition is skewed to low complexity.

This sequence belongs to the protein kinase superfamily. Ser/Thr protein kinase family. In terms of assembly, interacts (via CBD domain) with clathrin. Interacts with AP-2 complex. Interacts with NUMB. Interacts with alpha-adaptin. Interacts with EPS15. Interacts with membrane-bound activated NOTCH1 but not with the inactive full-length form of NOTCH1. Preferentially interacts with monoubiquitinated activated NOTCH1 compared to the non-ubiquitinated form. In terms of processing, autophosphorylated.

It localises to the cell membrane. Its subcellular location is the membrane. The protein resides in the clathrin-coated pit. It is found in the presynapse. It carries out the reaction L-seryl-[protein] + ATP = O-phospho-L-seryl-[protein] + ADP + H(+). It catalyses the reaction L-threonyl-[protein] + ATP = O-phospho-L-threonyl-[protein] + ADP + H(+). Its activity is regulated as follows. Stimulated by clathrin. Functionally, regulates clathrin-mediated endocytosis by phosphorylating the AP2M1/mu2 subunit of the adaptor protein complex 2 (AP-2) which ensures high affinity binding of AP-2 to cargo membrane proteins during the initial stages of endocytosis. Preferentially, may phosphorylate substrates on threonine residues. Regulates phosphorylation of other AP-2 subunits as well as AP-2 localization and AP-2-mediated internalization of ligand complexes. Phosphorylates NUMB and regulates its cellular localization, promoting NUMB localization to endosomes. Binds to and stabilizes the activated form of NOTCH1, increases its localization in endosomes and regulates its transcriptional activity. The sequence is that of AP2-associated protein kinase 1 (Aak1) from Rattus norvegicus (Rat).